The chain runs to 69 residues: Cytochrome c oxidase subunit 8A, mitochondrial (69 aa).

The N-terminal 25 residues, M1–Q25, are a transit peptide targeting the mitochondrion. The short motif at Y2–L19 is the SIFI-degron element. Over V26–G36 the chain is Mitochondrial matrix. The helical transmembrane segment at V37 to S60 threads the bilayer. At H61–G69 the chain is on the mitochondrial intermembrane side.

The protein belongs to the cytochrome c oxidase VIII family. Component of the cytochrome c oxidase (complex IV, CIV), a multisubunit enzyme composed of 14 subunits. The complex is composed of a catalytic core of 3 subunits MT-CO1, MT-CO2 and MT-CO3, encoded in the mitochondrial DNA, and 11 supernumerary subunits COX4I, COX5A, COX5B, COX6A, COX6B, COX6C, COX7A, COX7B, COX7C, COX8 and NDUFA4, which are encoded in the nuclear genome. The complex exists as a monomer or a dimer and forms supercomplexes (SCs) in the inner mitochondrial membrane with NADH-ubiquinone oxidoreductase (complex I, CI) and ubiquinol-cytochrome c oxidoreductase (cytochrome b-c1 complex, complex III, CIII), resulting in different assemblies (supercomplex SCI(1)III(2)IV(1) and megacomplex MCI(2)III(2)IV(2)). In terms of processing, in response to mitochondrial stress, the precursor protein is ubiquitinated by the SIFI complex in the cytoplasm before mitochondrial import, leading to its degradation. Within the SIFI complex, UBR4 initiates ubiquitin chain that are further elongated or branched by KCMF1.

It localises to the mitochondrion inner membrane. It participates in energy metabolism; oxidative phosphorylation. In terms of biological role, component of the cytochrome c oxidase, the last enzyme in the mitochondrial electron transport chain which drives oxidative phosphorylation. The respiratory chain contains 3 multisubunit complexes succinate dehydrogenase (complex II, CII), ubiquinol-cytochrome c oxidoreductase (cytochrome b-c1 complex, complex III, CIII) and cytochrome c oxidase (complex IV, CIV), that cooperate to transfer electrons derived from NADH and succinate to molecular oxygen, creating an electrochemical gradient over the inner membrane that drives transmembrane transport and the ATP synthase. Cytochrome c oxidase is the component of the respiratory chain that catalyzes the reduction of oxygen to water. Electrons originating from reduced cytochrome c in the intermembrane space (IMS) are transferred via the dinuclear copper A center (CU(A)) of subunit 2 and heme A of subunit 1 to the active site in subunit 1, a binuclear center (BNC) formed by heme A3 and copper B (CU(B)). The BNC reduces molecular oxygen to 2 water molecules using 4 electrons from cytochrome c in the IMS and 4 protons from the mitochondrial matrix. In Ateles belzebuth (White-bellied spider monkey), this protein is Cytochrome c oxidase subunit 8A, mitochondrial (COX8A).